A 170-amino-acid chain; its full sequence is Probable chorismate pyruvate-lyase (170 aa).

3 residues coordinate substrate: Arg77, Leu114, and Glu157.

It belongs to the UbiC family.

The protein localises to the cytoplasm. The catalysed reaction is chorismate = 4-hydroxybenzoate + pyruvate. It functions in the pathway cofactor biosynthesis; ubiquinone biosynthesis. Functionally, removes the pyruvyl group from chorismate, with concomitant aromatization of the ring, to provide 4-hydroxybenzoate (4HB) for the ubiquinone pathway. In Pasteurella multocida (strain Pm70), this protein is Probable chorismate pyruvate-lyase.